The sequence spans 502 residues: Potassium channel KAT3 (502 aa).

The Cytoplasmic segment spans residues 1 to 67 (MPRSSRMNLW…PYDPRYKVWE (67 aa)). The chain crosses the membrane as a helical span at residues 68–88 (TFLIILVVYSAWICPLEFAFL). The Extracellular segment spans residues 89–95 (RYLPSAP). A helical transmembrane segment spans residues 96 to 116 (FVVDDVVNGFFAVDIMLTFFV). Residues 117–138 (PFVDKKSYLLVNDPKKIAVRYL) lie on the Cytoplasmic side of the membrane. A helical membrane pass occupies residues 139 to 159 (SSWFVFDVCSTVPFHSISLLF). Topologically, residues 160 to 169 (NEHGHDLGFK) are extracellular. A helical; Voltage-sensor membrane pass occupies residues 170–190 (FLNVLRLWRLRRVSSMFARLE). Residues 191–204 (KDIRFNYAVIRCTK) are Cytoplasmic-facing. The helical transmembrane segment at 205–225 (LISVTLFAIHCAGCINYLIAD) threads the bilayer. At 226 to 252 (RYPDPRRTWIGAVMPNFREDGLWIRYV) the chain is on the extracellular side. Residues 253–272 (TAMYWSITTLTTTGYGDLHA) constitute an intramembrane region (pore-forming). Over 273 to 276 (ENAR) the chain is Extracellular. The helical transmembrane segment at 277–297 (EMLFGICYMLFNLWLTAYLIG) threads the bilayer. Residues 298 to 502 (NMTNLVVHST…IRSNLQQVNV (205 aa)) are Cytoplasmic-facing. 381 to 500 (LFKGVSSRFI…DIIRSNLQQV (120 aa)) is a binding site for a nucleoside 3',5'-cyclic phosphate.

The protein belongs to the potassium channel family. Plant (TC 1.A.1.4) subfamily.

It localises to the membrane. Functionally, probable inward-rectifying potassium channel. Assuming opened or closed conformations in response to the voltage difference across the membrane, the channel is activated by hyperpolarization. The protein is Potassium channel KAT3 of Oryza sativa subsp. japonica (Rice).